A 532-amino-acid chain; its full sequence is Nectin-4 (532 aa).

Positions 1–30 (MGPLHGALLPPISVTVSLLILLLCAPGGRC) are cleaved as a signal peptide. In terms of domain architecture, Ig-like V-type spans 31-142 (GVVHTEKSMT…GNFDAELELK (112 aa)). Residues 31 to 344 (GVVHTEKSMT…TKIDLVSVSL (314 aa)) lie on the Extracellular side of the membrane. Cystine bridges form between Cys51/Cys125, Cys169/Cys221, and Cys266/Cys312. Ig-like C2-type domains follow at residues 146–235 (PPLP…KRIT) and 244–328 (AEVS…AIVS). The disordered stretch occupies residues 152–179 (GPGPPLTEGEGKSLAASCTAEGNPAPTL). Residues Asn189 and Asn282 are each glycosylated (N-linked (GlcNAc...) asparagine). The helical transmembrane segment at 345-365 (GSVGILTAVLLVVLVITLLLV) threads the bilayer. The Cytoplasmic segment spans residues 366-532 (NRHHKRQTKQ…IYINGRGHLV (167 aa)). The disordered stretch occupies residues 453–491 (QTELLSTVPDEEVKEDGEEPEQVEQSLEKEPNPTEPDGM). The span at 461 to 474 (PDEEVKEDGEEPEQ) shows a compositional bias: acidic residues.

It belongs to the nectin family.

It is found in the cell membrane. May be involved in cell adhesion. This is Nectin-4 from Xenopus tropicalis (Western clawed frog).